The sequence spans 255 residues: F-box/SPRY domain-containing protein 1 (255 aa).

The F-box domain maps to 3-51 (DPVAALCNYNVLEVIFSYLELDDLSHCSQVCKSWNLFLNDENSDVWRWH). One can recognise a B30.2/SPRY domain in the interval 61 to 253 (LKSDLLSSVS…VSMVYLGTPM (193 aa)).

This sequence belongs to the FBXO45/Fsn family. In terms of assembly, component of an E3 ubiquitin ligase complex composed of hiw and Fsn.

Its subcellular location is the synapse. It functions in the pathway protein modification; protein ubiquitination. Its function is as follows. Required in the presynaptic motoneuron to down-regulate the levels of wnd and restrain synaptic terminal growth at the neuromuscular junction (NMJ). This chain is F-box/SPRY domain-containing protein 1, found in Drosophila ananassae (Fruit fly).